The following is a 212-amino-acid chain: Ribonuclease HII (212 aa).

The RNase H type-2 domain maps to 1-205; sequence MTICGVDEAG…VQDILDRASQ (205 aa). A divalent metal cation is bound by residues aspartate 7, glutamate 8, and aspartate 100.

It belongs to the RNase HII family. It depends on Mn(2+) as a cofactor. Mg(2+) is required as a cofactor.

The protein resides in the cytoplasm. It catalyses the reaction Endonucleolytic cleavage to 5'-phosphomonoester.. Its function is as follows. Endonuclease that specifically degrades the RNA of RNA-DNA hybrids. This is Ribonuclease HII from Methanocorpusculum labreanum (strain ATCC 43576 / DSM 4855 / Z).